Reading from the N-terminus, the 277-residue chain is Phosphate import ATP-binding protein PstB 2 (277 aa).

Residues 31 to 272 enclose the ABC transporter domain; the sequence is IEVPGLNLFY…PAKKQTEDYI (242 aa). 63–70 serves as a coordination point for ATP; the sequence is GPSGCGKS.

This sequence belongs to the ABC transporter superfamily. Phosphate importer (TC 3.A.1.7) family. The complex is composed of two ATP-binding proteins (PstB), two transmembrane proteins (PstC and PstA) and a solute-binding protein (PstS).

The protein resides in the cell inner membrane. The enzyme catalyses phosphate(out) + ATP + H2O = ADP + 2 phosphate(in) + H(+). Functionally, part of the ABC transporter complex PstSACB involved in phosphate import. Responsible for energy coupling to the transport system. The sequence is that of Phosphate import ATP-binding protein PstB 2 from Pseudomonas syringae pv. syringae (strain B728a).